The sequence spans 366 residues: Alanine racemase (366 aa).

Catalysis depends on Lys-40, which acts as the Proton acceptor; specific for D-alanine. Residue Lys-40 is modified to N6-(pyridoxal phosphate)lysine. Arg-136 provides a ligand contact to substrate. Tyr-263 acts as the Proton acceptor; specific for L-alanine in catalysis. Residue Met-310 coordinates substrate.

The protein belongs to the alanine racemase family. Pyridoxal 5'-phosphate is required as a cofactor.

It catalyses the reaction L-alanine = D-alanine. Its pathway is amino-acid biosynthesis; D-alanine biosynthesis; D-alanine from L-alanine: step 1/1. In terms of biological role, catalyzes the interconversion of L-alanine and D-alanine. May also act on other amino acids. This chain is Alanine racemase (alr), found in Streptococcus pyogenes serotype M6 (strain ATCC BAA-946 / MGAS10394).